The sequence spans 197 residues: Potassium-transporting ATPase KdpC subunit (197 aa).

A helical transmembrane segment spans residues 7 to 27; the sequence is PALVSMGLFTVLLGLAYPLAV.

The protein belongs to the KdpC family. In terms of assembly, the system is composed of three essential subunits: KdpA, KdpB and KdpC.

It localises to the cell inner membrane. Its function is as follows. Part of the high-affinity ATP-driven potassium transport (or Kdp) system, which catalyzes the hydrolysis of ATP coupled with the electrogenic transport of potassium into the cytoplasm. This subunit acts as a catalytic chaperone that increases the ATP-binding affinity of the ATP-hydrolyzing subunit KdpB by the formation of a transient KdpB/KdpC/ATP ternary complex. The protein is Potassium-transporting ATPase KdpC subunit of Caulobacter vibrioides (strain ATCC 19089 / CIP 103742 / CB 15) (Caulobacter crescentus).